The primary structure comprises 402 residues: Acetate kinase (402 aa).

Residue Asn7 coordinates Mg(2+). Lys14 lines the ATP pocket. Arg95 serves as a coordination point for substrate. Residue Asp152 is the Proton donor/acceptor of the active site. ATP is bound by residues 212 to 216, 286 to 288, and 334 to 338; these read HLGNG, DMR, and GIGEN. Glu388 contacts Mg(2+).

Belongs to the acetokinase family. Homodimer. The cofactor is Mg(2+). It depends on Mn(2+) as a cofactor.

Its subcellular location is the cytoplasm. It catalyses the reaction acetate + ATP = acetyl phosphate + ADP. It functions in the pathway metabolic intermediate biosynthesis; acetyl-CoA biosynthesis; acetyl-CoA from acetate: step 1/2. Catalyzes the formation of acetyl phosphate from acetate and ATP. Can also catalyze the reverse reaction. This Nitratidesulfovibrio vulgaris (strain DP4) (Desulfovibrio vulgaris) protein is Acetate kinase.